A 217-amino-acid polypeptide reads, in one-letter code: NADPH-dependent 3-demethoxyubiquinone 3-hydroxylase, mitochondrial (217 aa).

Tandem repeats lie at residues 49–130 and 131–217. The segment at 49–217 is 2 X approximate tandem repeats; sequence IIERIIRVDH…KTAIWLSTRV (169 aa). Arg52 contacts NADH. The Fe cation site is built by Glu61, Glu91, His94, Glu143, Glu178, and His181. Arg216 provides a ligand contact to NADH.

Belongs to the COQ7 family. Component of a multi-subunit COQ enzyme complex. The cofactor is Fe cation.

It is found in the mitochondrion inner membrane. The catalysed reaction is a 5-methoxy-2-methyl-3-(all-trans-polyprenyl)benzoquinone + NADH + O2 = a 3-demethylubiquinone + NAD(+) + H2O. The protein operates within cofactor biosynthesis; ubiquinone biosynthesis. Its function is as follows. Catalyzes the hydroxylation of the 5-methoxy-2-methyl-3-(all-trans-polyprenyl)benzoquinone at the C6 position and participates in the biosynthesis of ubiquinone. Catalyzes the reaction through a substrate-mediated reduction pathway, whereby NADH shuttles electrons to 5-methoxy-2-methyl-3-(all-trans-decaprenyl)benzoquinone, which then transfers the electrons to the two Fe(3+) centers. The binding of 5-methoxy-2-methyl-3-(all-trans-polyprenyl)benzoquinone (DMQn) mediates reduction of the diiron center by nicotinamide adenine dinucleotide (NADH) and initiates oxygen activation for subsequent DMQ hydroxylation. Also has a structural role in the COQ enzyme complex, stabilizing other COQ polypeptides. This is NADPH-dependent 3-demethoxyubiquinone 3-hydroxylase, mitochondrial from Dictyostelium discoideum (Social amoeba).